The sequence spans 422 residues: Tryptophan synthase beta chain 1 (422 aa).

The residue at position 107 (Lys107) is an N6-(pyridoxal phosphate)lysine.

The protein belongs to the TrpB family. In terms of assembly, tetramer of two alpha and two beta chains. The cofactor is pyridoxal 5'-phosphate.

The enzyme catalyses (1S,2R)-1-C-(indol-3-yl)glycerol 3-phosphate + L-serine = D-glyceraldehyde 3-phosphate + L-tryptophan + H2O. The protein operates within amino-acid biosynthesis; L-tryptophan biosynthesis; L-tryptophan from chorismate: step 5/5. Functionally, the beta subunit is responsible for the synthesis of L-tryptophan from indole and L-serine. This Sulfurisphaera tokodaii (strain DSM 16993 / JCM 10545 / NBRC 100140 / 7) (Sulfolobus tokodaii) protein is Tryptophan synthase beta chain 1 (trpB1).